Consider the following 512-residue polypeptide: Cytochrome P450 26B1 (512 aa).

Cys-441 provides a ligand contact to heme.

Belongs to the cytochrome P450 family. Requires heme as cofactor. In terms of tissue distribution, highly expressed in brain, particularly in the cerebellum and pons.

It is found in the endoplasmic reticulum membrane. The protein localises to the microsome membrane. It catalyses the reaction all-trans-retinoate + reduced [NADPH--hemoprotein reductase] + O2 = all-trans-4-hydroxyretinoate + oxidized [NADPH--hemoprotein reductase] + H2O + H(+). The enzyme catalyses all-trans-retinoate + reduced [NADPH--hemoprotein reductase] + O2 = all-trans-18-hydroxyretinoate + oxidized [NADPH--hemoprotein reductase] + H2O + H(+). Its function is as follows. A cytochrome P450 monooxygenase involved in the metabolism of retinoates (RAs), the active metabolites of vitamin A, and critical signaling molecules in animals. RAs exist as at least four different isomers: all-trans-RA (atRA), 9-cis-RA, 13-cis-RA, and 9,13-dicis-RA, where atRA is considered to be the biologically active isomer, although 9-cis-RA and 13-cis-RA also have activity. Catalyzes the hydroxylation of atRA primarily at C-4 and C-18, thereby contributing to the regulation of atRA homeostasis and signaling. Hydroxylation of atRA limits its biological activity and initiates a degradative process leading to its eventual elimination. Involved in the convertion of atRA to all-trans-4-oxo-RA. Can oxidize all-trans-13,14-dihydroretinoate (DRA) to metabolites which could include all-trans-4-oxo-DRA, all-trans-4-hydroxy-DRA, all-trans-5,8-epoxy-DRA, and all-trans-18-hydroxy-DRA. Shows preference for the following substrates: atRA &gt; 9-cis-RA &gt; 13-cis-RA. Plays a central role in germ cell development: acts by degrading RAs in the developing testis, preventing STRA8 expression, thereby leading to delay of meiosis. Required for the maintenance of the undifferentiated state of male germ cells during embryonic development in Sertoli cells, inducing arrest in G0 phase of the cell cycle and preventing meiotic entry. Plays a role in skeletal development, both at the level of patterning and in the ossification of bone and the establishment of some synovial joints. Essential for postnatal survival. Also has a significant activity in oxidation of tazarotenic acid and may therefore metabolize that xenobiotic in vivo. In Homo sapiens (Human), this protein is Cytochrome P450 26B1 (CYP26B1).